The sequence spans 743 residues: tRNA(Met) cytidine acetyltransferase TmcA (743 aa).

Residues glutamine 216, 241 to 250 (GRGKSASIGL), and arginine 390 contribute to the ATP site. Positions 420-604 (LKIEDVSQEE…YSVIVIRALS (185 aa)) constitute an N-acetyltransferase domain. Residues 531–533 (IAV) and 538–544 (QGKGIGS) contribute to the acetyl-CoA site.

The protein belongs to the RNA cytidine acetyltransferase family. TmcA subfamily.

Its subcellular location is the cytoplasm. It carries out the reaction cytidine(34) in elongator tRNA(Met) + acetyl-CoA + ATP + H2O = N(4)-acetylcytidine(34) in elongator tRNA(Met) + ADP + phosphate + CoA + H(+). In terms of biological role, catalyzes the formation of N(4)-acetylcytidine (ac(4)C) at the wobble position of tRNA(Met), by using acetyl-CoA as an acetyl donor and ATP (or GTP). The protein is tRNA(Met) cytidine acetyltransferase TmcA of Saccharolobus islandicus (strain Y.G.57.14 / Yellowstone #1) (Sulfolobus islandicus).